The following is a 300-amino-acid chain: Nucleotide-binding protein Dshi_0209 (300 aa).

20–27 contacts ATP; the sequence is GPSGAGRT. 67–70 lines the GTP pocket; the sequence is DART.

Belongs to the RapZ-like family.

Displays ATPase and GTPase activities. The chain is Nucleotide-binding protein Dshi_0209 from Dinoroseobacter shibae (strain DSM 16493 / NCIMB 14021 / DFL 12).